Here is a 547-residue protein sequence, read N- to C-terminus: Chaperonin GroEL (547 aa).

ATP contacts are provided by residues 30 to 33 (TLGP), Lys-51, 87 to 91 (DGTTT), Gly-415, and Asp-496.

Belongs to the chaperonin (HSP60) family. As to quaternary structure, forms a cylinder of 14 subunits composed of two heptameric rings stacked back-to-back. Interacts with the co-chaperonin GroES.

The protein resides in the cytoplasm. The enzyme catalyses ATP + H2O + a folded polypeptide = ADP + phosphate + an unfolded polypeptide.. In terms of biological role, together with its co-chaperonin GroES, plays an essential role in assisting protein folding. The GroEL-GroES system forms a nano-cage that allows encapsulation of the non-native substrate proteins and provides a physical environment optimized to promote and accelerate protein folding. The polypeptide is Chaperonin GroEL (Actinobacillus pleuropneumoniae (Haemophilus pleuropneumoniae)).